A 1216-amino-acid chain; its full sequence is Probable cation-transporting ATPase 13A5 (1216 aa).

Helical transmembrane passes span 33–53, 198–218, 222–242, 401–421, and 433–453; these read RALC…MFYW, LLVK…LTLW, GYIE…VLSV, FMVF…GVYM, and MALI…LTIG. The active-site 4-aspartylphosphate intermediate is the Asp486. Residues Asn650 and Asn817 are each glycosylated (N-linked (GlcNAc...) asparagine). Residues Asp848 and Asp852 each contribute to the Mg(2+) site. The next 6 membrane-spanning stretches (helical) occupy residues 896–916, 933–950, 971–991, 1040–1060, 1075–1095, and 1113–1133; these read ALVS…IQFI, YLLQ…TMSI, LLLS…CTFL, FEGT…AFIF, LFSL…FCDF, and VSIL…EDAV.

The protein belongs to the cation transport ATPase (P-type) (TC 3.A.3) family. Type V subfamily. Specifically expressed in brain and stomach.

Its subcellular location is the membrane. The catalysed reaction is ATP + H2O = ADP + phosphate + H(+). In Mus musculus (Mouse), this protein is Probable cation-transporting ATPase 13A5 (Atp13a5).